The sequence spans 346 residues: Holliday junction branch migration complex subunit RuvB (346 aa).

The interval 1–183 is large ATPase domain (RuvB-L); that stretch reads MTEQRIIASS…FGIVQRLEFY (183 aa). ATP contacts are provided by residues isoleucine 22, arginine 23, glycine 64, lysine 67, threonine 68, threonine 69, 130-132, arginine 173, tyrosine 183, and arginine 220; that span reads EDF. Residue threonine 68 participates in Mg(2+) binding. Residues 184 to 254 are small ATPAse domain (RuvB-S); it reads SPQELTRIVI…VAQAAMQMLK (71 aa). Residues 257–346 form a head domain (RuvB-H) region; sequence PEGFDELDRR…PGIGEPGDLF (90 aa). 3 residues coordinate DNA: arginine 293, arginine 312, and arginine 317.

It belongs to the RuvB family. As to quaternary structure, homohexamer. Forms an RuvA(8)-RuvB(12)-Holliday junction (HJ) complex. HJ DNA is sandwiched between 2 RuvA tetramers; dsDNA enters through RuvA and exits via RuvB. An RuvB hexamer assembles on each DNA strand where it exits the tetramer. Each RuvB hexamer is contacted by two RuvA subunits (via domain III) on 2 adjacent RuvB subunits; this complex drives branch migration. In the full resolvosome a probable DNA-RuvA(4)-RuvB(12)-RuvC(2) complex forms which resolves the HJ.

It localises to the cytoplasm. The catalysed reaction is ATP + H2O = ADP + phosphate + H(+). Its function is as follows. The RuvA-RuvB-RuvC complex processes Holliday junction (HJ) DNA during genetic recombination and DNA repair, while the RuvA-RuvB complex plays an important role in the rescue of blocked DNA replication forks via replication fork reversal (RFR). RuvA specifically binds to HJ cruciform DNA, conferring on it an open structure. The RuvB hexamer acts as an ATP-dependent pump, pulling dsDNA into and through the RuvAB complex. RuvB forms 2 homohexamers on either side of HJ DNA bound by 1 or 2 RuvA tetramers; 4 subunits per hexamer contact DNA at a time. Coordinated motions by a converter formed by DNA-disengaged RuvB subunits stimulates ATP hydrolysis and nucleotide exchange. Immobilization of the converter enables RuvB to convert the ATP-contained energy into a lever motion, pulling 2 nucleotides of DNA out of the RuvA tetramer per ATP hydrolyzed, thus driving DNA branch migration. The RuvB motors rotate together with the DNA substrate, which together with the progressing nucleotide cycle form the mechanistic basis for DNA recombination by continuous HJ branch migration. Branch migration allows RuvC to scan DNA until it finds its consensus sequence, where it cleaves and resolves cruciform DNA. The protein is Holliday junction branch migration complex subunit RuvB of Xanthomonas axonopodis pv. citri (strain 306).